The chain runs to 78 residues: Large ribosomal subunit protein bL28 (78 aa).

The protein belongs to the bacterial ribosomal protein bL28 family.

This chain is Large ribosomal subunit protein bL28, found in Hydrogenovibrio crunogenus (strain DSM 25203 / XCL-2) (Thiomicrospira crunogena).